A 61-amino-acid chain; its full sequence is Large ribosomal subunit protein bL32 (61 aa).

A compositionally biased stretch (basic residues) spans 1-16 (MAVPKRKTSPSKRGMR). The interval 1-61 (MAVPKRKTSP…RQVLTPKESA (61 aa)) is disordered. Positions 28–44 (VEDKNSGELRRPHHIDL) are enriched in basic and acidic residues.

It belongs to the bacterial ribosomal protein bL32 family.

The protein is Large ribosomal subunit protein bL32 of Rhizobium etli (strain CIAT 652).